The sequence spans 456 residues: ATP synthase subunit beta 1 (456 aa).

Position 152–159 (152–159 (GGAGVGKS)) interacts with ATP.

It belongs to the ATPase alpha/beta chains family. As to quaternary structure, F-type ATPases have 2 components, CF(1) - the catalytic core - and CF(0) - the membrane proton channel. CF(1) has five subunits: alpha(3), beta(3), gamma(1), delta(1), epsilon(1). CF(0) has three main subunits: a(1), b(2) and c(9-12). The alpha and beta chains form an alternating ring which encloses part of the gamma chain. CF(1) is attached to CF(0) by a central stalk formed by the gamma and epsilon chains, while a peripheral stalk is formed by the delta and b chains.

It is found in the cell membrane. It carries out the reaction ATP + H2O + 4 H(+)(in) = ADP + phosphate + 5 H(+)(out). Its function is as follows. Produces ATP from ADP in the presence of a proton gradient across the membrane. The catalytic sites are hosted primarily by the beta subunits. This Listeria welshimeri serovar 6b (strain ATCC 35897 / DSM 20650 / CCUG 15529 / CIP 8149 / NCTC 11857 / SLCC 5334 / V8) protein is ATP synthase subunit beta 1.